Consider the following 443-residue polypeptide: FAD-dependent monooxygenase orf3 (443 aa).

The chain crosses the membrane as a helical span at residues 5–25 (SIEVAIIGAGITGITLALGLL). 2 residues coordinate FAD: glutamate 35 and glycine 48. Asparagine 75 and asparagine 87 each carry an N-linked (GlcNAc...) asparagine glycan. Arginine 116 contacts FAD. Arginine 199 is an active-site residue. FAD is bound by residues aspartate 315 and alanine 328.

Belongs to the paxM FAD-dependent monooxygenase family. FAD serves as cofactor.

The protein resides in the membrane. The protein operates within secondary metabolite biosynthesis. Functionally, FAD-dependent monooxygenase; part of the gene cluster that mediates the biosynthesis of nigerpyrone and its derivatives carbonarone A and pestalamide A. The biosynthesis pathway begins with the polyketide assembly by epaA to form phenylacetyl triketide precursor from successive condensation of two malonyl-CoA, presumably with one phenylacetyl-CoA starter unit produced by the phenylacetyl-CoA ligase epaB. For the nigerpyrone biosynthesis, the reactive polyketide chain is released as an aldehyde through the R-domain. A nonenzymatic cyclization and dehydration may create nigerpyrone. For the biosynthesis of carbonarone A and pestalamide A, an extra methyl group is added through the C-methyltransferase domain. Several further steps involving the dehydrogenase orf1, the cytochrome P450 monooxygenase orf2 and the FAD-dependent monooxygenase orf3 are required to form a carbonarone A precursor which is converted to carbonarone A via cyclization. The O-acetyltransferase epaC could catalyze the transfer of 2-methylsuccinyl-CoA, a common intermediate in the ethylmalonyl-CoA pathway, to generate the final product pestalamide A. This chain is FAD-dependent monooxygenase orf3, found in Aspergillus niger (strain ATCC MYA-4892 / CBS 513.88 / FGSC A1513).